The primary structure comprises 513 residues: Cytochrome P450 71D445 (513 aa).

The helical; Signal-anchor for type II membrane protein transmembrane segment at 12–28 (SEWAITSTITLLFLILL) threads the bilayer. Cysteine 450 is a heme binding site.

Belongs to the cytochrome P450 family. Heme serves as cofactor. In terms of tissue distribution, expressed in mature seeds.

The protein localises to the membrane. It catalyses the reaction (-)-casbene + reduced [NADPH--hemoprotein reductase] + O2 = 8-hydroxycasbene + oxidized [NADPH--hemoprotein reductase] + H2O + H(+). The catalysed reaction is 4-hydroxycasbene + reduced [NADPH--hemoprotein reductase] + O2 = 4,8-dihydroxycasbene + oxidized [NADPH--hemoprotein reductase] + H2O + H(+). The enzyme catalyses 4,8-dihydroxycasbene + reduced [NADPH--hemoprotein reductase] + O2 = 4,5,8-trihydroxycasbene + oxidized [NADPH--hemoprotein reductase] + H2O + H(+). Its pathway is secondary metabolite biosynthesis; terpenoid biosynthesis. In terms of biological role, involved in the biosynthesis of macrocyclic lathyrane type diterpenoids (also called Euphorbia factors) natural products, including the cyclization route from casbene to jolkinol C, a precursor for ingenol mebutate that is used to treat actinic keratosis, a precancerous skin condition. Catalyzes the hydroxylation of (-)-casbene and 4-hydroxycasbene to produce 8-hydroxycasbene and 4,8-dihydroxycasbene, respectively. Also mediates the formation of 4-hydroxy-8-ketocasbene from 4,8-dihydroxycasbene. Together with ADH1, triggers the biosynthesis of 8-ketocasbene from 8-hydroxycasbene. This chain is Cytochrome P450 71D445, found in Euphorbia lathyris (Caper spurge).